An 81-amino-acid chain; its full sequence is uncharacterized protein (81 aa).

Belongs to the ycf70 family.

It is found in the plastid. Its subcellular location is the chloroplast. This is an uncharacterized protein from Saccharum officinarum (Sugarcane).